The following is a 406-amino-acid chain: GTPase Obg (406 aa).

Positions 1–159 constitute an Obg domain; sequence MKFVDEVSIH…RDLKLELKVL (159 aa). Positions 127 to 148 are disordered; the sequence is NTRFKSSTNRAPRQTTPGKPGE. The span at 129–143 shows a compositional bias: polar residues; the sequence is RFKSSTNRAPRQTTP. Residues 160-334 enclose the OBG-type G domain; that stretch reads ADVGLLGLPN…LSQDIMRYLD (175 aa). GTP contacts are provided by residues 166 to 173, 191 to 195, 213 to 216, 283 to 286, and 315 to 317; these read GLPNAGKS, FTTLV, DIPG, NKMD, and SAL. 2 residues coordinate Mg(2+): serine 173 and threonine 193. Residues 382 to 406 form a disordered region; sequence AGAVDDDDFDDEEDDGDGPEIFYVP. A compositionally biased stretch (acidic residues) spans 385-399; that stretch reads VDDDDFDDEEDDGDG.

The protein belongs to the TRAFAC class OBG-HflX-like GTPase superfamily. OBG GTPase family. As to quaternary structure, monomer. The cofactor is Mg(2+).

Its subcellular location is the cytoplasm. Functionally, an essential GTPase which binds GTP, GDP and possibly (p)ppGpp with moderate affinity, with high nucleotide exchange rates and a fairly low GTP hydrolysis rate. Plays a role in control of the cell cycle, stress response, ribosome biogenesis and in those bacteria that undergo differentiation, in morphogenesis control. The protein is GTPase Obg of Pseudomonas aeruginosa (strain LESB58).